A 1626-amino-acid chain; its full sequence is DNA topoisomerase 2-beta (1626 aa).

An N-acetylalanine modification is found at A2. At K3 the chain carries N6-acetyllysine. Residues Q28, N29, K33, and K34 each participate in a glycyl lysine isopeptide (Lys-Gly) (interchain with G-Cter in SUMO2) cross-link. ATP is bound by residues N112, N141, and 169-171 (SSN). Glycyl lysine isopeptide (Lys-Gly) (interchain with G-Cter in SUMO2) cross-links involve residues K177 and K178. 182 to 189 (GRNGYGAK) is an ATP binding site. Glycyl lysine isopeptide (Lys-Gly) (interchain with G-Cter in SUMO2) cross-links involve residues K228 and K299. The tract at residues 363–365 (KKK) is interaction with DNA. Glycyl lysine isopeptide (Lys-Gly) (interchain with G-Cter in SUMO2) cross-links involve residues K367 and K373. Residue 397 to 399 (QTK) participates in ATP binding. Residues K437, K439, and K446 each participate in a glycyl lysine isopeptide (Lys-Gly) (interchain with G-Cter in SUMO2) cross-link. Residues 476-593 (CTLILTEGDS…SLLKHGFLEE (118 aa)) form the Toprim domain. Mg(2+)-binding residues include E482, D562, and D564. Glycyl lysine isopeptide (Lys-Gly) (interchain with G-Cter in SUMO2) cross-links involve residues K600, K605, K635, K643, K646, K676, and K712. In terms of domain architecture, Topo IIA-type catalytic spans 736-1189 (IPSLVDGFKP…SPSDLWKEDL (454 aa)). Y826 serves as the catalytic O-(5'-phospho-DNA)-tyrosine intermediate. Positions 1011-1020 (KLQTTLTCNS) are interaction with DNA. The Nuclear export signal motif lies at 1034-1044 (ETVQDILKEFF). K1092 participates in a covalent cross-link: Glycyl lysine isopeptide (Lys-Gly) (interchain with G-Cter in SUMO2). The tract at residues 1110–1140 (AWKEAQEKAAEEDETQNQHDDSSSDSGTPSG) is disordered. Glycyl lysine isopeptide (Lys-Gly) (interchain with G-Cter in SUMO2) cross-links involve residues K1214, K1217, K1226, and K1227. At S1236 the chain carries Phosphoserine. Residues K1250, K1262, and K1271 each participate in a glycyl lysine isopeptide (Lys-Gly) (interchain with G-Cter in SUMO2) cross-link. The tract at residues 1274–1604 (FDEEFSGAPV…PSLPRTGRAR (331 aa)) is disordered. T1292 is subject to Phosphothreonine. Glycyl lysine isopeptide (Lys-Gly) (interchain with G-Cter in SUMO2) cross-links involve residues K1323 and K1327. 2 stretches are compositionally biased toward basic and acidic residues: residues 1334–1344 (PWSDDESKSES) and 1358–1370 (SLLR…RPKY). Residues S1336, S1340, S1342, S1344, and S1358 each carry the phosphoserine modification. A Phosphotyrosine modification is found at Y1370. Over residues 1374 to 1392 (FSEEEDDDADDDDDDNNDL) the composition is skewed to acidic residues. S1375 bears the Phosphoserine mark. K1398 is covalently cross-linked (Glycyl lysine isopeptide (Lys-Gly) (interchain with G-Cter in SUMO2)). S1400 carries the phosphoserine modification. T1403 bears the Phosphothreonine mark. Residue S1413 is modified to Phosphoserine. Y1421 bears the Phosphotyrosine mark. Phosphoserine is present on S1424. The segment covering 1430-1442 (ATPEKSLHDKKSQ) has biased composition (basic and acidic residues). A Glycyl lysine isopeptide (Lys-Gly) (interchain with G-Cter in SUMO2) cross-link involves residue K1440. A phosphoserine mark is found at S1441, S1452, and S1454. A Glycyl lysine isopeptide (Lys-Gly) (interchain with G-Cter in SUMO2) cross-link involves residue K1456. Residues 1456-1466 (KSEDDSAKFDS) show a composition bias toward basic and acidic residues. Phosphoserine is present on residues S1461, S1466, S1473, and S1476. Residue K1490 forms a Glycyl lysine isopeptide (Lys-Gly) (interchain with G-Cter in SUMO2) linkage. Residues 1506–1512 (KPKRAPK) are interaction with PLSCR1. Residues S1522, S1524, and S1526 each carry the phosphoserine modification. A compositionally biased stretch (basic residues) spans 1539–1549 (GKGRGAKKRKA). Phosphoserine is present on residues S1550 and S1552. Residues 1563–1574 (KTSKTTSKKPKK) are compositionally biased toward basic residues. Phosphothreonine is present on T1575. 2 positions are modified to phosphoserine: S1576 and S1581. T1592 is subject to Phosphothreonine. S1596 is subject to Phosphoserine. Y1609 is subject to Phosphotyrosine. Position 1613 is a phosphoserine (S1613).

This sequence belongs to the type II topoisomerase family. Homodimer. Interacts with KIAA1210. Interacts with PLSCR1. Requires Mg(2+) as cofactor. It depends on Mn(2+) as a cofactor. Ca(2+) serves as cofactor. Post-translationally, (Microbial infection) Deubiquitinated by Epstein-Barr virus BPLF1; leading to stabilized SUMOylated TOP2A trapped in cleavage complexes, which halts the DNA damage response to TOP2A-induced double-strand DNA breaks. SUMOylated. Expressed in the tonsil, spleen, lymph node, thymus, skin, pancreas, testis, colon, kidney, liver, brain and lung. Also found in breast, colon and lung carcinomas, Hodgkin's disease, large-cell non-Hodgkin's lymphoma, lymphocytic lymphomas and seminomas.

It is found in the nucleus. Its subcellular location is the nucleolus. The protein resides in the nucleoplasm. The catalysed reaction is ATP-dependent breakage, passage and rejoining of double-stranded DNA.. Its function is as follows. Key decatenating enzyme that alters DNA topology by binding to two double-stranded DNA molecules, generating a double-stranded break in one of the strands, passing the intact strand through the broken strand, and religating the broken strand. Plays a role in B-cell differentiation. The protein is DNA topoisomerase 2-beta (TOP2B) of Homo sapiens (Human).